Here is a 353-residue protein sequence, read N- to C-terminus: Chemerin-like receptor 2 (353 aa).

The Extracellular segment spans residues 1–41 (MEVSREMLFEELDNYSYALEYYSQEPDAEENVYPGIVHWIS). Asn-14 carries N-linked (GlcNAc...) asparagine glycosylation. The chain crosses the membrane as a helical span at residues 42–62 (LLLYALAFVLGIPGNAIVIWF). The Cytoplasmic segment spans residues 63 to 73 (MGFKWKKTVTT). The helical transmembrane segment at 74–94 (LWFLNLAIADFVFVLFLPLYI) threads the bilayer. The Extracellular segment spans residues 95-112 (SYVALSFHWPFGRWLCKL). A disulfide bridge links Cys-110 with Cys-187. Residues 113 to 133 (NSFIAQLNMFSSVFFLTVISL) form a helical membrane-spanning segment. Residues 134-154 (DRYIHLIHPGLSHPHRTLKNS) lie on the Cytoplasmic side of the membrane. A helical transmembrane segment spans residues 155–175 (LLVVLFVWLLASLLGGPTLYF). At 176 to 210 (RDTVEVNNRIICYNNFQEYELTLMRHHVLTWVKFL) the chain is on the extracellular side. A helical transmembrane segment spans residues 211–231 (FGYLLPLLTMSSCYLCLIFKT). Topologically, residues 232-247 (KKQNILISSKHLWMIL) are cytoplasmic. A helical transmembrane segment spans residues 248 to 268 (SVVIAFMVCWTPFHLFSIWEL). Topologically, residues 269 to 286 (SIHHNSSFQNVLQGGIPL) are extracellular. Residues 287 to 307 (STGLAFLNSCLNPILYVLISK) form a helical membrane-spanning segment. At 308–353 (KFQARFRASVAEVLKRSLWEASCSGTVSEQLRSAETKSLSLLETAQ) the chain is on the cytoplasmic side.

It belongs to the chemokine-like receptor (CMKLR) family.

It localises to the cell membrane. Functionally, receptor for chemoattractant adipokine chemerin/RARRES2 suggesting a role for this receptor in the regulation of inflammation and energy homesotasis. Signals mainly via beta-arrestin pathway. Binding of RARRES2 activates weakly G proteins, calcium mobilization and MAPK1/MAPK3 (ERK1/2) phosphorylation too. Acts also as a receptor for TAFA1, mediates its effects on neuronal stem-cell proliferation and differentiation via the activation of ROCK/ERK and ROCK/STAT3 signaling pathway. The sequence is that of Chemerin-like receptor 2 (Cmklr2) from Rattus norvegicus (Rat).